Consider the following 638-residue polypeptide: 1-deoxy-D-xylulose-5-phosphate synthase (638 aa).

Thiamine diphosphate is bound by residues histidine 79 and 120 to 122 (AHS). A Mg(2+)-binding site is contributed by aspartate 151. Thiamine diphosphate contacts are provided by residues 152–153 (GA), asparagine 180, tyrosine 289, and glutamate 371. Asparagine 180 contributes to the Mg(2+) binding site.

Belongs to the transketolase family. DXPS subfamily. In terms of assembly, homodimer. It depends on Mg(2+) as a cofactor. Thiamine diphosphate is required as a cofactor.

It carries out the reaction D-glyceraldehyde 3-phosphate + pyruvate + H(+) = 1-deoxy-D-xylulose 5-phosphate + CO2. Its pathway is metabolic intermediate biosynthesis; 1-deoxy-D-xylulose 5-phosphate biosynthesis; 1-deoxy-D-xylulose 5-phosphate from D-glyceraldehyde 3-phosphate and pyruvate: step 1/1. In terms of biological role, catalyzes the acyloin condensation reaction between C atoms 2 and 3 of pyruvate and glyceraldehyde 3-phosphate to yield 1-deoxy-D-xylulose-5-phosphate (DXP). The sequence is that of 1-deoxy-D-xylulose-5-phosphate synthase from Rhizobium etli (strain ATCC 51251 / DSM 11541 / JCM 21823 / NBRC 15573 / CFN 42).